A 38-amino-acid chain; its full sequence is Cytochrome b6-f complex subunit 5 (38 aa).

Residues L5 to A25 form a helical membrane-spanning segment.

It belongs to the PetG family. As to quaternary structure, the 4 large subunits of the cytochrome b6-f complex are cytochrome b6, subunit IV (17 kDa polypeptide, PetD), cytochrome f and the Rieske protein, while the 4 small subunits are PetG, PetL, PetM and PetN. The complex functions as a dimer.

The protein resides in the cellular thylakoid membrane. Functionally, component of the cytochrome b6-f complex, which mediates electron transfer between photosystem II (PSII) and photosystem I (PSI), cyclic electron flow around PSI, and state transitions. PetG is required for either the stability or assembly of the cytochrome b6-f complex. This Picosynechococcus sp. (strain ATCC 27264 / PCC 7002 / PR-6) (Agmenellum quadruplicatum) protein is Cytochrome b6-f complex subunit 5.